The chain runs to 475 residues: TOM1-like protein 1 (475 aa).

The region spanning 22 to 154 (ATFAGVQTED…DLLKKGVQFP (133 aa)) is the VHS domain. A disordered region spans residues 155–175 (PLDGEPETKQEAGQISPSRPT). Polar residues predominate over residues 165–175 (EAGQISPSRPT). Phosphoserine is present on serine 170. Positions 199 to 287 (EQIGKLHSEL…AILGYERFTR (89 aa)) constitute a GAT domain. Residues 296 to 317 (KRNPTEANQTSSEPSAPSCDLL) form a disordered region. Over residues 300–310 (TEANQTSSEPS) the composition is skewed to polar residues. Phosphoserine is present on serine 313. Residues 392 to 395 (YDNF) form an interaction with GRB2 region. The SH3-binding signature appears at 421 to 425 (LPPLP). Residues 442–445 (YEVM) are interaction with PIK3R1. A Phosphotyrosine modification is found at tyrosine 458. The SH2-binding signature appears at 458–461 (YEEI).

This sequence belongs to the TOM1 family. Interacts with the SH2 and SH3 domains of FYN when phosphorylated. Also interacts with GRB2 and PIK3R1 when phosphorylated. Interacts with LYN. Phosphorylated on tyrosines by FYN and LYN.

The protein localises to the golgi apparatus. The protein resides in the golgi stack. Its subcellular location is the endosome membrane. It localises to the cytoplasm. It is found in the membrane. In terms of biological role, probable adapter protein involved in signaling pathways. Interacts with the SH2 and SH3 domains of various signaling proteins when it is phosphorylated. May promote FYN activation, possibly by disrupting intramolecular SH3-dependent interactions. In Rattus norvegicus (Rat), this protein is TOM1-like protein 1 (Tom1l1).